We begin with the raw amino-acid sequence, 549 residues long: Cytoplasmic trehalase (549 aa).

Residues arginine 168, 175–176, asparagine 212, 221–223, 292–294, and glycine 324 contribute to the substrate site; these read WD, RSQ, and RDE. Catalysis depends on proton donor/acceptor residues aspartate 326 and glutamate 509. Glutamate 525 is a binding site for substrate.

The protein belongs to the glycosyl hydrolase 37 family. Monomer.

The protein resides in the cytoplasm. The enzyme catalyses alpha,alpha-trehalose + H2O = alpha-D-glucose + beta-D-glucose. It functions in the pathway glycan degradation; trehalose degradation; D-glucose from alpha,alpha-trehalose: step 1/1. Functionally, hydrolyzes trehalose to glucose. Could be involved, in cells returning to low osmolarity conditions, in the utilization of the accumulated cytoplasmic trehalose, which was synthesized in response to high osmolarity. This Escherichia coli O157:H7 protein is Cytoplasmic trehalase.